Here is a 292-residue protein sequence, read N- to C-terminus: NAD kinase (292 aa).

The Proton acceptor role is filled by aspartate 73. Residues 73–74, 147–148, histidine 158, arginine 175, aspartate 177, 188–193, and glutamine 247 each bind NAD(+); these read DG, NE, and TAYSLS.

It belongs to the NAD kinase family. The cofactor is a divalent metal cation.

The protein localises to the cytoplasm. It catalyses the reaction NAD(+) + ATP = ADP + NADP(+) + H(+). In terms of biological role, involved in the regulation of the intracellular balance of NAD and NADP, and is a key enzyme in the biosynthesis of NADP. Catalyzes specifically the phosphorylation on 2'-hydroxyl of the adenosine moiety of NAD to yield NADP. The chain is NAD kinase from Escherichia coli (strain UTI89 / UPEC).